The primary structure comprises 222 residues: Small ribosomal subunit protein uS5 (222 aa).

The interval 1–41 (MAEQAGAGSAQDNRGGGRDDRGGRGRRDDRGGRGGRDDREK) is disordered. Positions 15–41 (GGGRDDRGGRGRRDDRGGRGGRDDREK) are enriched in basic and acidic residues. Positions 44–107 (YLERVVTINR…EEARKNFFRV (64 aa)) constitute an S5 DRBM domain.

It belongs to the universal ribosomal protein uS5 family. In terms of assembly, part of the 30S ribosomal subunit. Contacts proteins S4 and S8.

Functionally, with S4 and S12 plays an important role in translational accuracy. Its function is as follows. Located at the back of the 30S subunit body where it stabilizes the conformation of the head with respect to the body. This chain is Small ribosomal subunit protein uS5, found in Mycolicibacterium gilvum (strain PYR-GCK) (Mycobacterium gilvum (strain PYR-GCK)).